Reading from the N-terminus, the 156-residue chain is 6,7-dimethyl-8-ribityllumazine synthase (156 aa).

5-amino-6-(D-ribitylamino)uracil contacts are provided by residues Phe22, 57-59, and 81-83; these read AVE and SVI. 86-87 lines the (2S)-2-hydroxy-3-oxobutyl phosphate pocket; the sequence is GT. His89 (proton donor) is an active-site residue. Phe114 is a 5-amino-6-(D-ribitylamino)uracil binding site. Residue Arg128 participates in (2S)-2-hydroxy-3-oxobutyl phosphate binding.

The protein belongs to the DMRL synthase family. As to quaternary structure, forms an icosahedral capsid composed of 60 subunits, arranged as a dodecamer of pentamers.

The catalysed reaction is (2S)-2-hydroxy-3-oxobutyl phosphate + 5-amino-6-(D-ribitylamino)uracil = 6,7-dimethyl-8-(1-D-ribityl)lumazine + phosphate + 2 H2O + H(+). The protein operates within cofactor biosynthesis; riboflavin biosynthesis; riboflavin from 2-hydroxy-3-oxobutyl phosphate and 5-amino-6-(D-ribitylamino)uracil: step 1/2. Its function is as follows. Catalyzes the formation of 6,7-dimethyl-8-ribityllumazine by condensation of 5-amino-6-(D-ribitylamino)uracil with 3,4-dihydroxy-2-butanone 4-phosphate. This is the penultimate step in the biosynthesis of riboflavin. The sequence is that of 6,7-dimethyl-8-ribityllumazine synthase from Aliivibrio salmonicida (strain LFI1238) (Vibrio salmonicida (strain LFI1238)).